The chain runs to 250 residues: DNA repair protein RecO (250 aa).

Belongs to the RecO family.

Its function is as follows. Involved in DNA repair and RecF pathway recombination. The sequence is that of DNA repair protein RecO from Staphylococcus aureus (strain Mu3 / ATCC 700698).